Here is a 690-residue protein sequence, read N- to C-terminus: Peroxidase (690 aa).

The signal sequence occupies residues 1–20; that stretch reads MIRARDLLLLALLGFISSAL. A disulfide bond links cysteine 100 and cysteine 112. Histidine 185 acts as the Proton acceptor in catalysis. Asparagine 310 carries N-linked (GlcNAc...) asparagine glycosylation. A disulfide bond links cysteine 315 and cysteine 324. Histidine 437 is a heme b binding site. 2 disulfide bridges follow: cysteine 536–cysteine 592 and cysteine 636–cysteine 662.

This sequence belongs to the peroxidase family. XPO subfamily. It depends on heme b as a cofactor.

Its subcellular location is the secreted. It catalyses the reaction 2 a phenolic donor + H2O2 = 2 a phenolic radical donor + 2 H2O. Functionally, involved in the chorion hardening process, through protein cross-linking mediated by the formation of di- and tri-tyrosine bonds. The chain is Peroxidase (Pxd) from Drosophila melanogaster (Fruit fly).